The primary structure comprises 373 residues: Cytoplasmic tRNA 2-thiolation protein 1 (373 aa).

The protein belongs to the TtcA family. CTU1/NCS6/ATPBD3 subfamily.

Its subcellular location is the cytoplasm. The protein operates within tRNA modification; 5-methoxycarbonylmethyl-2-thiouridine-tRNA biosynthesis. Its function is as follows. Plays a central role in 2-thiolation of mcm(5)S(2)U at tRNA wobble positions of tRNA(Lys), tRNA(Glu) and tRNA(Gln). Directly binds tRNAs and probably acts by catalyzing adenylation of tRNAs, an intermediate required for 2-thiolation. It is unclear whether it acts as a sulfurtransferase that transfers sulfur from thiocarboxylated URM1 onto the uridine of tRNAs at wobble position. Prior mcm(5) tRNA modification by the elongator complex is required for 2-thiolation. May also be involved in protein urmylation. The polypeptide is Cytoplasmic tRNA 2-thiolation protein 1 (Malassezia globosa (strain ATCC MYA-4612 / CBS 7966) (Dandruff-associated fungus)).